The following is a 273-amino-acid chain: MASSASSLHFLSLTPQTLPLPKPTSQTTSLSFFSLPPSSLNLSLSSSSSCFSSRFVRKVTLSDFDQIEDVEDGDDGVEEERNFSPDLKIFVGNLPFSADSAALAELFERAGNVEMVEVIYDKLTGRSRGFGFVTMSSKEEVEAACQQFNGYELDGRALRVNSGPPPEKRENSSFRGGSRGGGSFDSSNRVYVGNLAWGVDQDALETLFSEQGKVVDAKVVYDRDSGRSRGFGFVTYSSAEEVNNAIESLDGVDLNGRAIRVSPAEARPPRRQF.

The N-terminal 58 residues, 1–58, are a transit peptide targeting the chloroplast; sequence MASSASSLHFLSLTPQTLPLPKPTSQTTSLSFFSLPPSSLNLSLSSSSSCFSSRFVRK. The RRM 1 domain maps to 87–165; the sequence is LKIFVGNLPF…RALRVNSGPP (79 aa). The tract at residues 156-181 is disordered; it reads RALRVNSGPPPEKRENSSFRGGSRGG. The tract at residues 166–187 is linker (Gly-rich); that stretch reads PEKRENSSFRGGSRGGGSFDSS. Residues 188 to 266 enclose the RRM 2 domain; the sequence is NRVYVGNLAW…RAIRVSPAEA (79 aa).

It is found in the plastid. The protein localises to the chloroplast. Functionally, could be involved in splicing and/or processing of chloroplast RNA's. The chain is 29 kDa ribonucleoprotein A, chloroplastic from Nicotiana sylvestris (Wood tobacco).